The chain runs to 307 residues: Membrane protein insertase YidC 1 (307 aa).

An N-terminal signal peptide occupies residues 1–22 (MKSKKGLTLTITLGTLALFLSG). A lipid anchor (N-palmitoyl cysteine) is attached at C23. The S-diacylglycerol cysteine moiety is linked to residue C23. Helical transmembrane passes span 59–79 (YGWA…PMMI), 136–156 (GIGC…YYAI), 177–197 (LILA…SMIG), 205–225 (TMRL…MSAP), and 226–246 (AGLG…TLII). A disordered region spans residues 260-307 (ELKKHPIKTPTPTQPKPINATESKPSHPRPQNNAGRGRNAGKQQRHHK).

It belongs to the OXA1/ALB3/YidC family. Type 2 subfamily.

The protein localises to the cell membrane. Its function is as follows. Required for the insertion and/or proper folding and/or complex formation of integral membrane proteins into the membrane. Involved in integration of membrane proteins that insert both dependently and independently of the Sec translocase complex, as well as at least some lipoproteins. This Lactiplantibacillus plantarum (strain ATCC BAA-793 / NCIMB 8826 / WCFS1) (Lactobacillus plantarum) protein is Membrane protein insertase YidC 1.